The primary structure comprises 234 residues: NAD-dependent protein deacylase (234 aa).

The Deacetylase sirtuin-type domain occupies 1–234 (MKNLVILSGA…IEMASQEMLK (234 aa)). An NAD(+)-binding site is contributed by 9-28 (GAGISAESGIKTFRDAGGLW). Tyrosine 53 and arginine 56 together coordinate substrate. 86-89 (QNVD) contributes to the NAD(+) binding site. Histidine 104 functions as the Proton acceptor in the catalytic mechanism. NAD(+) contacts are provided by residues 169 to 171 (GTS) and methionine 217.

It belongs to the sirtuin family. Class III subfamily.

Its subcellular location is the cytoplasm. It carries out the reaction N(6)-acetyl-L-lysyl-[protein] + NAD(+) + H2O = 2''-O-acetyl-ADP-D-ribose + nicotinamide + L-lysyl-[protein]. It catalyses the reaction N(6)-succinyl-L-lysyl-[protein] + NAD(+) + H2O = 2''-O-succinyl-ADP-D-ribose + nicotinamide + L-lysyl-[protein]. In terms of biological role, NAD-dependent lysine deacetylase and desuccinylase that specifically removes acetyl and succinyl groups on target proteins. Modulates the activities of several proteins which are inactive in their acylated form. This Helicobacter pylori (strain J99 / ATCC 700824) (Campylobacter pylori J99) protein is NAD-dependent protein deacylase.